Here is a 456-residue protein sequence, read N- to C-terminus: Chordin-like protein 1 (456 aa).

The N-terminal stretch at methionine 1–threonine 27 is a signal peptide. 2 VWFC domains span residues threonine 35–proline 100 and lysine 113–arginine 179. The N-linked (GlcNAc...) asparagine glycan is linked to asparagine 118. The short motif at arginine 179–aspartate 181 is the Cell attachment site element. A disordered region spans residues alanine 202–serine 223. The VWFC 3 domain occupies glutamine 258–proline 323. Asparagine 291 carries an N-linked (GlcNAc...) asparagine glycan.

In terms of tissue distribution, expressed in the developing cornea and in the eye anterior segment in addition to the retina. Differentially expressed in the fetal brain. There is high expression in cerebellum and neocortex. Expressed in retinal pericytes.

Its subcellular location is the secreted. Its function is as follows. Antagonizes the function of BMP4 by binding to it and preventing its interaction with receptors. Alters the fate commitment of neural stem cells from gliogenesis to neurogenesis. Contributes to neuronal differentiation of neural stem cells in the brain by preventing the adoption of a glial fate. May play a crucial role in dorsoventral axis formation. May play a role in embryonic bone formation. May also play an important role in regulating retinal angiogenesis through modulation of BMP4 actions in endothelial cells. Plays a role during anterior segment eye development. This is Chordin-like protein 1 (CHRDL1) from Homo sapiens (Human).